We begin with the raw amino-acid sequence, 277 residues long: Cation-dependent mannose-6-phosphate receptor (277 aa).

An N-terminal signal peptide occupies residues 1-26 (MFPFYSCWRTGLLLLLLAVAVRESWQ). Residues 27–185 (TEEKTCDLVG…SLACSPEISH (159 aa)) are Lumenal-facing. The region spanning 30-181 (KTCDLVGEKG…EMDSSLACSP (152 aa)) is the MRH domain. Cysteine 32 and cysteine 78 are disulfide-bonded. Residues asparagine 57, asparagine 83, asparagine 94, asparagine 107, and asparagine 113 are each glycosylated (N-linked (GlcNAc...) asparagine). 2 disulfides stabilise this stretch: cysteine 132–cysteine 167 and cysteine 145–cysteine 179. A helical transmembrane segment spans residues 186–210 (LSVGSILLVTFASLVAVYVVGGFLY). The Cytoplasmic segment spans residues 211–277 (QRLVVGAKGM…EERDDHLLPM (67 aa)). The disordered stretch occupies residues 256–277 (RGVGDDQLGEESEERDDHLLPM). The residue at position 267 (serine 267) is a Phosphoserine.

Homodimer. Binds GGA1, GGA2 and GGA3.

The protein localises to the lysosome membrane. Its function is as follows. Transport of phosphorylated lysosomal enzymes from the Golgi complex and the cell surface to lysosomes. Lysosomal enzymes bearing phosphomannosyl residues bind specifically to mannose-6-phosphate receptors in the Golgi apparatus and the resulting receptor-ligand complex is transported to an acidic prelyosomal compartment where the low pH mediates the dissociation of the complex. The sequence is that of Cation-dependent mannose-6-phosphate receptor (M6PR) from Homo sapiens (Human).